We begin with the raw amino-acid sequence, 2434 residues long: Protein Ycf2 (2434 aa).

1693–1700 is a binding site for ATP; that stretch reads GPTETGRS.

The protein belongs to the Ycf2 family.

It is found in the plastid. The protein localises to the chloroplast stroma. In terms of biological role, probable ATPase of unknown function. Its presence in a non-photosynthetic plant (Epifagus virginiana) and experiments in tobacco indicate that it has an essential function which is probably not related to photosynthesis. This chain is Protein Ycf2, found in Cycas taitungensis (Prince sago).